We begin with the raw amino-acid sequence, 127 residues long: Small ribosomal subunit protein uS12 (127 aa).

Asp89 bears the 3-methylthioaspartic acid mark. The interval 104-127 (TQGVKDRKQARSKYGTKRAKAGKK) is disordered. Residues 113 to 127 (ARSKYGTKRAKAGKK) are compositionally biased toward basic residues.

Belongs to the universal ribosomal protein uS12 family. In terms of assembly, part of the 30S ribosomal subunit. Contacts proteins S8 and S17. May interact with IF1 in the 30S initiation complex.

Its function is as follows. With S4 and S5 plays an important role in translational accuracy. Functionally, interacts with and stabilizes bases of the 16S rRNA that are involved in tRNA selection in the A site and with the mRNA backbone. Located at the interface of the 30S and 50S subunits, it traverses the body of the 30S subunit contacting proteins on the other side and probably holding the rRNA structure together. The combined cluster of proteins S8, S12 and S17 appears to hold together the shoulder and platform of the 30S subunit. The chain is Small ribosomal subunit protein uS12 from Herminiimonas arsenicoxydans.